A 561-amino-acid polypeptide reads, in one-letter code: MAKWIVGSAWPYVNTVPHLGNLIGSVLSADVFARFLRLMGEDVVFVSGSDEHGTPIEVEARKRGVEPKELTDKVHEYVKKLFEKYLISFDNYTRTHNPVHMEFVRETFMKIYENGYIFTQEMVMPYCPKDKMFLPDRFTVGTCPYCGAPDARGDQCERCGKLLDPPDLVNPRCAFCGSRPVWRKTLHWFFDLPKAAEGLVEWLERSELPNNVKKFTLNWVKEGLTPRSVTRDNKWGIPAPFPGAEGKTIYVWFEAVLGYLSAVKELDVKNGTNLFEEFWKDINSRPVYFIGKDNIPFHSIILPALLKATGEEYPLPYNISATEYLMYEGQKFSKRRRVGVWIDEALEVVPNPDYWRFALIRMRPEERDTNFTWREFYRIVNSELNDDIGNFAHRVLTFVERRFGGSVRGRVDEEVKKSIAELHEKYVKAMYKVKLKEASGLVLEMARLGNKYLNEKEPWRLLKEGKEEEARDVMYTCLFILREVALHLAPFAPSAAEELWKMIGEPGSVHERGKLLTSGSEPAGEVKEPKPLFQKLPKDFLERVDELLEEARRKVEKLRPI.

The 'HIGH' region motif lies at 11-21 (PYVNTVPHLGN). Residues Cys-143, Cys-146, Cys-156, and Cys-159 each contribute to the Zn(2+) site. Lys-334 contributes to the ATP binding site.

Belongs to the class-I aminoacyl-tRNA synthetase family. MetG type 1 subfamily. The cofactor is Zn(2+).

It is found in the cytoplasm. It catalyses the reaction tRNA(Met) + L-methionine + ATP = L-methionyl-tRNA(Met) + AMP + diphosphate. Its function is as follows. Is required not only for elongation of protein synthesis but also for the initiation of all mRNA translation through initiator tRNA(fMet) aminoacylation. The polypeptide is Methionine--tRNA ligase (Ignicoccus hospitalis (strain KIN4/I / DSM 18386 / JCM 14125)).